A 172-amino-acid chain; its full sequence is Probable phosphatase YqeG (172 aa).

Has low dephosphorylation activity on GMP and glucose-6-phosphate. The protein is Probable phosphatase YqeG (yqeG) of Bacillus subtilis (strain 168).